The following is a 459-amino-acid chain: Pup--protein ligase (459 aa).

Glutamate 9 is a Mg(2+) binding site. Arginine 54 contributes to the ATP binding site. Tyrosine 56 contributes to the Mg(2+) binding site. The active-site Proton acceptor is the aspartate 58. Residue glutamate 64 participates in Mg(2+) binding. 2 residues coordinate ATP: threonine 67 and tryptophan 421.

Belongs to the Pup ligase/Pup deamidase family. Pup-conjugating enzyme subfamily.

The catalysed reaction is ATP + [prokaryotic ubiquitin-like protein]-L-glutamate + [protein]-L-lysine = ADP + phosphate + N(6)-([prokaryotic ubiquitin-like protein]-gamma-L-glutamyl)-[protein]-L-lysine.. Its pathway is protein degradation; proteasomal Pup-dependent pathway. It participates in protein modification; protein pupylation. Catalyzes the covalent attachment of the prokaryotic ubiquitin-like protein modifier Pup to the proteasomal substrate proteins, thereby targeting them for proteasomal degradation. This tagging system is termed pupylation. The ligation reaction involves the side-chain carboxylate of the C-terminal glutamate of Pup and the side-chain amino group of a substrate lysine. The protein is Pup--protein ligase of Jonesia denitrificans (strain ATCC 14870 / DSM 20603 / BCRC 15368 / CIP 55.134 / JCM 11481 / NBRC 15587 / NCTC 10816 / Prevot 55134) (Listeria denitrificans).